The primary structure comprises 106 residues: P4 prophage-derived uncharacterized protein t2655 (106 aa).

The polypeptide is P4 prophage-derived uncharacterized protein t2655 (Salmonella typhi).